Reading from the N-terminus, the 132-residue chain is Fatty acid-binding protein, adipocyte (132 aa).

Residue Cys-2 is modified to N-acetylcysteine. Phosphoserine is present on Ser-13. Phosphotyrosine; by Tyr-kinases is present on Tyr-20. The Nuclear localization signal signature appears at 22-32 (KEVGVGFATRK). 127-129 (RVY) is an a fatty acid binding site.

The protein belongs to the calycin superfamily. Fatty-acid binding protein (FABP) family. As to quaternary structure, monomer. Homodimer. Interacts with PPARG.

Its subcellular location is the cytoplasm. It is found in the nucleus. In terms of biological role, lipid transport protein in adipocytes. Binds both long chain fatty acids and retinoic acid. Delivers long-chain fatty acids and retinoic acid to their cognate receptors in the nucleus. FABPs are important elements related to the hibernating state in mammals. The polypeptide is Fatty acid-binding protein, adipocyte (FABP4) (Ictidomys tridecemlineatus (Thirteen-lined ground squirrel)).